A 266-amino-acid chain; its full sequence is Glutamate racemase (266 aa).

Substrate-binding positions include 9–10 (DS) and 41–42 (YG). Cysteine 72 functions as the Proton donor/acceptor in the catalytic mechanism. Position 73-74 (73-74 (NT)) interacts with substrate. The active-site Proton donor/acceptor is the cysteine 184. 185-186 (TH) is a binding site for substrate.

Belongs to the aspartate/glutamate racemases family. Homodimer.

It catalyses the reaction L-glutamate = D-glutamate. It participates in cell wall biogenesis; peptidoglycan biosynthesis. Provides the (R)-glutamate required for cell wall biosynthesis. The chain is Glutamate racemase from Staphylococcus aureus (strain MRSA252).